The primary structure comprises 157 residues: Transcriptional repressor NrdR (157 aa).

A zinc finger lies at 3 to 34 (CPKCNSTHSRVVDSRHADEANAIRRRRECENC). Positions 49-139 (LIVVKKDGTR…VYKEFKDVDQ (91 aa)) constitute an ATP-cone domain.

Belongs to the NrdR family. Zn(2+) is required as a cofactor.

In terms of biological role, negatively regulates transcription of bacterial ribonucleotide reductase nrd genes and operons by binding to NrdR-boxes. In Staphylococcus carnosus (strain TM300), this protein is Transcriptional repressor NrdR.